The primary structure comprises 394 residues: 1-deoxy-D-xylulose 5-phosphate reductoisomerase (394 aa).

NADPH-binding residues include Thr-12, Gly-13, Ser-14, Ile-15, Gly-38, Asn-41, and Asn-132. A 1-deoxy-D-xylulose 5-phosphate-binding site is contributed by Lys-133. NADPH is bound at residue Glu-134. Position 156 (Asp-156) interacts with Mn(2+). Ser-157, Glu-158, Ser-182, and His-205 together coordinate 1-deoxy-D-xylulose 5-phosphate. A Mn(2+)-binding site is contributed by Glu-158. Gly-211 is a binding site for NADPH. 1-deoxy-D-xylulose 5-phosphate is bound by residues Ser-218, Asn-223, Lys-224, and Glu-227. Glu-227 is a Mn(2+) binding site.

The protein belongs to the DXR family. Mg(2+) is required as a cofactor. The cofactor is Mn(2+).

The enzyme catalyses 2-C-methyl-D-erythritol 4-phosphate + NADP(+) = 1-deoxy-D-xylulose 5-phosphate + NADPH + H(+). Its pathway is isoprenoid biosynthesis; isopentenyl diphosphate biosynthesis via DXP pathway; isopentenyl diphosphate from 1-deoxy-D-xylulose 5-phosphate: step 1/6. In terms of biological role, catalyzes the NADPH-dependent rearrangement and reduction of 1-deoxy-D-xylulose-5-phosphate (DXP) to 2-C-methyl-D-erythritol 4-phosphate (MEP). This is 1-deoxy-D-xylulose 5-phosphate reductoisomerase from Arthrobacter sp. (strain FB24).